The following is a 571-amino-acid chain: Urease subunit alpha (571 aa).

The region spanning 133 to 571 is the Urease domain; it reads AGIDTHIHFI…VALNQRYFFS (439 aa). H138, H140, and K221 together coordinate Ni(2+). Residue K221 is modified to N6-carboxylysine. H223 contributes to the substrate binding site. Residues H250 and H276 each contribute to the Ni(2+) site. H324 functions as the Proton donor in the catalytic mechanism. Ni(2+) is bound at residue D364.

The protein belongs to the metallo-dependent hydrolases superfamily. Urease alpha subunit family. Heterotrimer of UreA (gamma), UreB (beta) and UreC (alpha) subunits. Three heterotrimers associate to form the active enzyme. It depends on Ni cation as a cofactor. Carboxylation allows a single lysine to coordinate two nickel ions.

It is found in the cytoplasm. The enzyme catalyses urea + 2 H2O + H(+) = hydrogencarbonate + 2 NH4(+). It participates in nitrogen metabolism; urea degradation; CO(2) and NH(3) from urea (urease route): step 1/1. The protein is Urease subunit alpha of Photorhabdus laumondii subsp. laumondii (strain DSM 15139 / CIP 105565 / TT01) (Photorhabdus luminescens subsp. laumondii).